A 117-amino-acid polypeptide reads, in one-letter code: Holo-[acyl-carrier-protein] synthase (117 aa).

Positions 6 and 55 each coordinate Mg(2+).

It belongs to the P-Pant transferase superfamily. AcpS family. Mg(2+) serves as cofactor.

The protein localises to the cytoplasm. It catalyses the reaction apo-[ACP] + CoA = holo-[ACP] + adenosine 3',5'-bisphosphate + H(+). Its function is as follows. Transfers the 4'-phosphopantetheine moiety from coenzyme A to a Ser of acyl-carrier-protein. In Chlorobaculum parvum (strain DSM 263 / NCIMB 8327) (Chlorobium vibrioforme subsp. thiosulfatophilum), this protein is Holo-[acyl-carrier-protein] synthase.